Reading from the N-terminus, the 70-residue chain is Insulin (70 aa).

Disulfide bonds link Cys-7–Cys-56, Cys-19–Cys-69, and Cys-55–Cys-60. Residues 33–49 (FVDSLAGYSKHQNGGIS) constitute a propeptide, c peptide.

Belongs to the insulin family. As to quaternary structure, heterodimer of a B chain and an A chain linked by two disulfide bonds.

It is found in the secreted. Its function is as follows. Insulin decreases blood glucose concentration. It increases cell permeability to monosaccharides, amino acids and fatty acids. It accelerates glycolysis, the pentose phosphate cycle, and glycogen synthesis in liver. This is Insulin (ins) from Torpedo marmorata (Marbled electric ray).